Here is a 379-residue protein sequence, read N- to C-terminus: Hydrogenase expression/formation protein HupD (379 aa).

C36, C64, and C67 together coordinate Fe cation.

Belongs to the HypD family.

The polypeptide is Hydrogenase expression/formation protein HupD (hupD) (Azotobacter chroococcum mcd 1).